The sequence spans 157 residues: Ribosome maturation factor RimP (157 aa).

Belongs to the RimP family.

It localises to the cytoplasm. Functionally, required for maturation of 30S ribosomal subunits. In Bacillus pumilus (strain SAFR-032), this protein is Ribosome maturation factor RimP.